We begin with the raw amino-acid sequence, 541 residues long: uncharacterized protein (541 aa).

A run of 12 helical transmembrane segments spans residues 99–119 (WIVV…SSVY), 131–153 (GVSI…FGSL), 165–185 (FVVY…GGCA), 187–207 (NIWT…TPLS), 224–244 (YVLP…PIIG), 256–276 (WVFW…FFFM), 325–345 (LLIT…VYII), 367–387 (IGLS…CTPI), 409–429 (LYPL…FAWT), 439–459 (WIVP…VFFV), 472–494 (AASA…SLVG), and 508–528 (SLLG…FIYG).

The protein belongs to the major facilitator superfamily. CAR1 family.

Its subcellular location is the membrane. This is an uncharacterized protein from Schizosaccharomyces pombe (strain 972 / ATCC 24843) (Fission yeast).